Reading from the N-terminus, the 417-residue chain is Carboxypeptidase A2 (417 aa).

An N-terminal signal peptide occupies residues 1–16 (MRLTPLLVALFGYIYC). Positions 17–112 (QETFVGDQVL…EMLFNQQRER (96 aa)) are cleaved as a propeptide — activation peptide. A Peptidase M14 domain is found at 120 to 412 (AYHTLEEIYQ…LGLKTIMEHV (293 aa)). Residues histidine 177 and glutamate 180 each contribute to the Zn(2+) site. Residues 177 to 180 (HARE), arginine 235, and 252 to 253 (NR) contribute to the substrate site. Residues cysteine 246 and cysteine 269 are joined by a disulfide bond. Histidine 304 provides a ligand contact to Zn(2+). Position 305–306 (305–306 (SY)) interacts with substrate. A disulfide bond links cysteine 318 and cysteine 352. A substrate-binding site is contributed by tyrosine 356. Glutamate 378 functions as the Proton donor/acceptor in the catalytic mechanism.

Belongs to the peptidase M14 family. Zn(2+) serves as cofactor.

Its subcellular location is the secreted. It carries out the reaction Similar to that of carboxypeptidase A (EC 3.4.17.1), but with a preference for bulkier C-terminal residues.. Carboxypeptidase that catalyzes the release of a C-terminal amino acid, with a preference for large aromatic C-terminal residues. The sequence is that of Carboxypeptidase A2 (Cpa2) from Mus musculus (Mouse).